The following is a 658-amino-acid chain: MKLYCLSGHPTLPCNVLKFKSTTIMLDCGLDMTSTLNFLPLPLVQSPRLSKLPGLVLKDGSTFLDKELKECSGHVFVDSVPEFCLPETELLDLSTVDVILISNYHCMMALPYITEYTGFTGTVYATEPTVQIGRLLMEELVNSIERVPKAQSASTWKNKEVQRLLPAPLKDAVEVSMWRKCYTMPEVNAALSKIQLVGYSQKIELFGAVQVTPLSSGYALGSSNWIIQSHYEKVSYVSGSSLLTTHPQPMDQASLKNSDVLILTGLTQIPTANPDGMVGEFCSNLAMTVRNGGNVLVPCYPSGVIYDLLECLYQYIDSAGLSNVPFYFISPVANSSLEFSQIFAEWLCHNKQTKVYLPEPPFPHAELIQTNKLKHYPSIHGDFSNDFKQPCVIFTGHPSLRFGDVVHFMELWGKSSLNTVIFTEPDFSYLDALAPYQPLAMKCVYCPIDTRLNFIQVSKLLKEVQPLHVVCPEQYTQPPPSQSHRTDLMIDCQPPPMSYRRAEVLTLPYKRRYEKIEIMPELADSLVPLEIKPGISLATVSAMLHTKDNKHVLQLPPKPPQPPTSKKRKRVSDDVPECKPLKPLLSGSIPVDQFVQTLEKHGFSDVKVEDTAKGHIVLLQEAETLIQIEEDSTHIICDNDEPLRVKLRDLVLKFLQKF.

Residues 550 to 574 (KHVLQLPPKPPQPPTSKKRKRVSDD) form a disordered region. The Nuclear localization signal motif lies at 566–570 (KKRKR).

This sequence belongs to the metallo-beta-lactamase superfamily. RNA-metabolizing metallo-beta-lactamase-like family. INTS9 subfamily. As to quaternary structure, component of the Integrator complex, composed of core subunits INTS1, INTS2, INTS3, INTS4, INTS5, INTS6, INTS7, INTS8, INTS9/RC74, INTS10, INTS11/CPSF3L, INTS12, INTS13, INTS14 and INTS15. The core complex associates with protein phosphatase 2A subunits PPP2CA and PPP2R1A, to form the Integrator-PP2A (INTAC) complex. INTS9 is part of the RNA endonuclease subcomplex, composed of INTS4, INTS9, INTS11 and inositol hexakisphosphate (InsP6).

It localises to the nucleus. The protein resides in the cytoplasm. Functionally, component of the integrator complex, a multiprotein complex that terminates RNA polymerase II (Pol II) transcription in the promoter-proximal region of genes. The integrator complex provides a quality checkpoint during transcription elongation by driving premature transcription termination of transcripts that are unfavorably configured for transcriptional elongation: the complex terminates transcription by (1) catalyzing dephosphorylation of the C-terminal domain (CTD) of Pol II subunit POLR2A/RPB1 and SUPT5H/SPT5, (2) degrading the exiting nascent RNA transcript via endonuclease activity and (3) promoting the release of Pol II from bound DNA. The integrator complex is also involved in terminating the synthesis of non-coding Pol II transcripts, such as enhancer RNAs (eRNAs), small nuclear RNAs (snRNAs), telomerase RNAs and long non-coding RNAs (lncRNAs). The protein is Integrator complex subunit 9 (INTS9) of Gallus gallus (Chicken).